The chain runs to 448 residues: Zinc finger and BTB domain-containing protein 44 (448 aa).

The 68-residue stretch at 31–98 (CDITIRVQDK…AYTATLSINT (68 aa)) folds into the BTB domain. A compositionally biased stretch (basic and acidic residues) spans 289–298 (LSDEEVHEEV). The tract at residues 289–320 (LSDEEVHEEVSQPVSASQSSMSDQQTVPGSEQ) is disordered. The segment covering 299-313 (SQPVSASQSSMSDQQ) has biased composition (low complexity). 2 consecutive C2H2-type zinc fingers follow at residues 394-416 (FQCP…MLIH) and 422-444 (FQCD…RLKH).

It localises to the nucleus. The polypeptide is Zinc finger and BTB domain-containing protein 44 (zbtb44) (Xenopus tropicalis (Western clawed frog)).